Here is a 467-residue protein sequence, read N- to C-terminus: E3 ubiquitin-protein ligase IE61 (467 aa).

The RING-type zinc finger occupies 19 to 58 (CTICMSTVSDLGKTMPCLHDFCFVCIRAWTSTSVQCPLCR). Disordered stretches follow at residues 101 to 171 (GDVI…GVTK), 205 to 238 (QQPR…FRAT), 344 to 364 (IVRP…RDTR), and 413 to 467 (DSAC…MKKS). The span at 116–143 (ESIQQPTSRSSREPIQSPNPGPLQSSAR) shows a compositional bias: polar residues. Low complexity predominate over residues 149 to 161 (SPSDSQQDSIQPP). The span at 162–171 (TRDSSPGVTK) shows a compositional bias: polar residues. Basic and acidic residues predominate over residues 228 to 238 (RTMDRLPFRAT). 2 stretches are compositionally biased toward low complexity: residues 429-443 (GESN…TSGS) and 450-459 (KSSAGKAGKG).

Interacts with host BTRC; this interaction seems to inactivate SCF-mediated protein degradation in general. Post-translationally, auto-ubiquitinated.

It catalyses the reaction S-ubiquitinyl-[E2 ubiquitin-conjugating enzyme]-L-cysteine + [acceptor protein]-L-lysine = [E2 ubiquitin-conjugating enzyme]-L-cysteine + N(6)-ubiquitinyl-[acceptor protein]-L-lysine.. Its function is as follows. RING-finger E3 ubiquitin ligase that degrades host SP100, one of the major components of ND10 nuclear bodies, thereby disrupting the organization of these bodies. Also plays a role in the inhibition of host NF-kappa-B pathway by blocking the SCF(BTRC)-mediated addition of ubiquitin chains to host I-kappa-B-alpha/NFKBIA, thereby interfering with its degradation. The protein is E3 ubiquitin-protein ligase IE61 (61) of Varicella-zoster virus (strain Dumas) (HHV-3).